A 150-amino-acid chain; its full sequence is 2-aminobenzenesulfonate 2,3-dioxygenase subunit beta (150 aa).

Belongs to the bacterial ring-hydroxylating dioxygenase beta subunit family. Heterotetramer with a alpha2beta2 structure.

It catalyses the reaction 2-aminobenzenesulfonate + NADH + O2 + 2 H(+) = 2,3-dihydroxybenzenesulfonate + NH4(+) + NAD(+). Inhibited by o-phenanthroline. Beta subunit of the oxygenase component of the 2-aminobenzenesulfonate 2,3-dioxygenase system (deaminating) (ABSDOS). Can use 2-aminobenzenesulfonate (ABS), benzenesulfonate (BS), 4-toluenesulfonate (TS), 2-nitrobenzenesulfonate, 3- and 4-aminobenzenesulfonates, 4-chloro- and 4-hydroxybenzenesulfonates and pyridine-3-sulfonate as substrates. No desulfonation of ABS to aminocatechol or aminophenol detected. In Alcaligenes sp, this protein is 2-aminobenzenesulfonate 2,3-dioxygenase subunit beta.